The following is a 200-amino-acid chain: ATP-dependent Clp protease proteolytic subunit (200 aa).

S104 acts as the Nucleophile in catalysis. H129 is an active-site residue.

The protein belongs to the peptidase S14 family. Fourteen ClpP subunits assemble into 2 heptameric rings which stack back to back to give a disk-like structure with a central cavity, resembling the structure of eukaryotic proteasomes.

The protein localises to the cytoplasm. It catalyses the reaction Hydrolysis of proteins to small peptides in the presence of ATP and magnesium. alpha-casein is the usual test substrate. In the absence of ATP, only oligopeptides shorter than five residues are hydrolyzed (such as succinyl-Leu-Tyr-|-NHMec, and Leu-Tyr-Leu-|-Tyr-Trp, in which cleavage of the -Tyr-|-Leu- and -Tyr-|-Trp bonds also occurs).. Its function is as follows. Cleaves peptides in various proteins in a process that requires ATP hydrolysis. Has a chymotrypsin-like activity. Plays a major role in the degradation of misfolded proteins. The protein is ATP-dependent Clp protease proteolytic subunit of Rubrobacter xylanophilus (strain DSM 9941 / JCM 11954 / NBRC 16129 / PRD-1).